The following is a 369-amino-acid chain: MTELTSAMDIDVDEIQPRKPINKGKDVVGFGPPPQSKATPWVEKYRPQSLDDVAAHRDIIDTIDRLTNENKLPHLLLYGPPGTGKTSTILAVARKLYGPKYRNMILELNASDDRGIDVVRQQIQDFASTQSFSLGKSSVKLVLLDEADAMTKDAQFALRRVIEKYTKSTRFALIGNHVNKIIPALQSRCTRFRFAPLDGVHMSQRLKHVIEAERLVVSDCGLAALVRLSNGDMRKALNILQSTHMASKEITEEESKQITEEDVYLCTGNPLPKDIEQISHWLLNKPFDECYKDVSEIKTRKGLAIVDIVKEITLFIFKIKMPSAVRVQLINDLADIEYRLSFGCNDKLQLGAIISTFTHARSIIVGAAK.

Positions 21 to 40 (INKGKDVVGFGPPPQSKATP) are disordered. 79–86 (GPPGTGKT) contributes to the ATP binding site.

This sequence belongs to the activator 1 small subunits family. In terms of assembly, heterotetramer of subunits RFC2, RFC3, RFC4 and RFC5 that can form a complex with RFC1.

Its subcellular location is the nucleus. Its function is as follows. Functions in cell replication and proliferation. May be involved in chromatin assembly and remodeling. Plays a role in the negative control of pathogenesis-related gene expression and systemic acquired resistance (SAR). The protein is Replication factor C subunit 5 (RFC5) of Arabidopsis thaliana (Mouse-ear cress).